Here is a 592-residue protein sequence, read N- to C-terminus: K(+) efflux antiporter 4 (592 aa).

An N-terminal signal peptide occupies residues 1–35 (MRRCKNNTDKFSVITMRLLTLLLICTFFFFFSFAY). A run of 12 helical transmembrane segments spans residues 169 to 189 (LISD…AFAC), 193 to 213 (PVIT…LSFV), 221 to 241 (TVAQ…FSAA), 248 to 268 (AVAI…SGIT), 279 to 299 (GIFV…KFLM), 313 to 333 (VGTL…LPVL), 343 to 363 (VLSM…LFVL), 388 to 408 (LAAV…GLSL), 437 to 457 (NFFA…HFLW), 462 to 482 (ILLA…AIVV), 491 to 511 (TAVL…VLLS), and 535 to 555 (LVTT…GVLL).

This sequence belongs to the monovalent cation:proton antiporter 2 (CPA2) transporter (TC 2.A.37) family. KEA (TC 2.A.37.1) subfamily. Expressed in roots, stems, leaves, flowers and silique.

It is found in the golgi apparatus membrane. The protein resides in the golgi apparatus. It localises to the trans-Golgi network membrane. The protein localises to the prevacuolar compartment membrane. Its subcellular location is the endomembrane system. The catalysed reaction is K(+)(in) + H(+)(out) = K(+)(out) + H(+)(in). Electroneutral K(+)/H(+) efflux antiporter involved in K(+) homeostasis and osmotic adjustment. Together with KEA5 and KEA6, promotes growth and development, and facilitates endosomal pH and ions homeostasis, as well as salt tolerance (e.g. K(+), NaCl and LiCl), probably by supporting cell wall biosynthesis during rapid etiolated seedling growth. This chain is K(+) efflux antiporter 4, found in Arabidopsis thaliana (Mouse-ear cress).